A 716-amino-acid chain; its full sequence is ATP-dependent DNA helicase DinG (716 aa).

The tract at residues 1 to 114 is HD1 domain N-terminus; that stretch reads MALTAALKAQ…PDLKFTAAFG (114 aa). The Helicase ATP-binding domain occupies 17 to 294; that stretch reads ALQEQIPDFI…TCMEQFRPKT (278 aa). Residues Ile26, Gln31, Lys60, and Thr61 each contribute to the ATP site. The segment at 115–216 is [4Fe-4S] domain; that stretch reads RGRYVCPRNL…FFVARREIQE (102 aa). 4 residues coordinate [4Fe-4S] cluster: Cys120, Cys194, Cys199, and Cys205. An HD1 domain middle region spans residues 217 to 261; the sequence is AEVVVANHALVMAAMESEAVLPDPKNLLLVLDEGHHLPDVARDAL. Positions 248-251 match the DEAH box motif; that stretch reads DEGH. The arch domain stretch occupies residues 262 to 438; the sequence is EMSAEITAPW…LHLWFHCVGI (177 aa). An HD1 domain middle region spans residues 439–491; sequence RVSDQLERLLWRSIPHIIVTSATLRSLNSFSRLQEMSGLKEKAGDRFVALDSP. The segment at 492-716 is HD2 domain; it reads FNHCEQGKIV…KTKSPRRRRR (225 aa). ATP is bound by residues Asp599, Arg656, and Arg659.

Belongs to the helicase family. DinG subfamily. Type 1 sub-subfamily. In terms of assembly, monomer in solution. The cofactor is [4Fe-4S] cluster. Requires Mg(2+) as cofactor.

The catalysed reaction is Couples ATP hydrolysis with the unwinding of duplex DNA at the replication fork by translocating in the 5'-3' direction. This creates two antiparallel DNA single strands (ssDNA). The leading ssDNA polymer is the template for DNA polymerase III holoenzyme which synthesizes a continuous strand.. It carries out the reaction ATP + H2O = ADP + phosphate + H(+). Its activity is regulated as follows. ATPase activity is 15-fold stimulated by single-stranded DNA (ssDNA). Reduction of the [4Fe-4S] cluster reversibly switches off helicase activity. Remains fully active after exposure to 100-fold excess of hydrogen peroxide, but the [4Fe-4S] cluster can be efficiently modified by nitric oxide (NO), forming the DinG-bound dinitrosyl iron complex with the concomitant inactivation of helicase activity. Helicase activity on G-quadruplex DNA is inhibited by porphyrin derivatives meso-tetra (N-methyl-4-pyridyl) porphine tetra tosylate (T4) and N-methyl mesoporphyrin IX (NMM). Helicase activity on forked duplexes is not inhibited by T4 or NMM. G-quadruplex ligands such as Pyridostatin, PhenDC3, BRACO-19 and Netropsin can alter recognition and unwinding of G-quadruplex DNAs; the effect is both ligand- and G-quadruplex DNA-specific. Functionally, DNA-dependent ATPase and 5'-3' DNA helicase. Can also unwind DNA:RNA hybrid duplexes. Is active on D-loops, R-loops, and on forked structures. Unwinds G-quadruplex DNA in a 5'-3' direction; unwinding efficiency differs on different substrates. Does not appear to unwind replication forks or Holliday junctions. Translocates on single-stranded (ss)DNA with a 5'-3' polarity. In vitro at high concentrations also unwinds in a 3'-5' direction. May be involved in recombinational DNA repair and the resumption of replication after DNA damage. The [4Fe-4S] cluster is redox active at cellular potentials and is involved in DNA-mediated charge-transport signaling between DNA repair proteins from distinct pathways. DinG cooperates at long-range with endonuclease III, a base excision repair enzyme, using DNA charge transport to redistribute to regions of DNA damage. Binds 10-11 nucleotides of ssDNA in a positively-charged groove across the helicase domains. This is ATP-dependent DNA helicase DinG from Escherichia coli (strain K12).